Reading from the N-terminus, the 36-residue chain is Potassium channel toxin alpha-KTx 16.1 (36 aa).

3 disulfide bridges follow: cysteine 7–cysteine 28, cysteine 13–cysteine 33, and cysteine 17–cysteine 35.

It belongs to the short scorpion toxin superfamily. Potassium channel inhibitor family. Alpha-KTx 16 subfamily. In terms of tissue distribution, expressed by the venom gland.

It localises to the secreted. Blocks calcium-activated potassium channels. The polypeptide is Potassium channel toxin alpha-KTx 16.1 (Hottentotta tamulus (Eastern Indian scorpion)).